Here is a 419-residue protein sequence, read N- to C-terminus: MNNQKQQKPTLTGQRFKTRKRDEKERFDPSQFQESIVQGLNQTGTDLEAVAKFLDASGAKLDYRRYAETLFDILVAGGMLAPGGTLSDDLTRTEYCLFTASEDLETMQAYAQVFNKLIRRYKYLEKGFEEEIKKLLLFLKGFTESERNKLAMLTGILLANGNISASILNSLFNENLVKEGVSAAFAVKLFKSWINEKDINSVAASLRKVGMDNRLMELFPANKRSCEHFSKYFTDAGLKELSDFARNQQSIGARKELQKELQEQMSRGETLKDIIAYVREEMKKTSISEQTMIGIVWTSVMSSVEWNKKEELVTEQAIKHLKQYSPLLKAFTSQGLSELTLLLKIQEYCYDNIHFMKAFQKIVVLLYKADVLSEEVILKWYTEGHVAKGKSVFLEQMKKFVEWLKNAEEESESEEEEGD.

Residues 1–15 (MNNQKQQKPTLTGQR) are compositionally biased toward polar residues. Positions 1–29 (MNNQKQQKPTLTGQRFKTRKRDEKERFDP) are disordered. The W2 domain maps to 247–414 (NQQSIGARKE…KNAEEESESE (168 aa)).

The protein belongs to the BZW family.

In terms of biological role, translation initiation regulator which may repress repeat-associated non-AUG (RAN) initiated translation probably by acting as a competitive inhibitor of eukaryotic translation initiation factor 5 (EIF5) function. Enhances histone H4 gene transcription but does not seem to bind DNA directly. This chain is eIF5-mimic protein 2-A (bzw1a), found in Danio rerio (Zebrafish).